We begin with the raw amino-acid sequence, 130 residues long: Small ribosomal subunit protein uS9 (130 aa).

Residues 108-130 form a disordered region; sequence SREVERKKVGLRKARKRPQYSKR. The segment covering 116–130 has biased composition (basic residues); that stretch reads VGLRKARKRPQYSKR.

This sequence belongs to the universal ribosomal protein uS9 family.

The protein is Small ribosomal subunit protein uS9 of Cellvibrio japonicus (strain Ueda107) (Pseudomonas fluorescens subsp. cellulosa).